A 229-amino-acid chain; its full sequence is MKEVIDTNTTGTNFKFENRNYKLQNQSFSFVRYKNFNLDKLLIPKTNANLNSTRNGVLTQAPTLDFVLNPVFVNAITNVYNLSEQVKDLEQRLESKSNESEKAGINSVLTQIKNKQVDYLKVKEYISSLDKDTNKVSTPINSTGWVKWYQEANKELGLNLNQEPKDWDQFLKLVASYFSMAIYANVTLGQKVTKEVKVWDGQNFQFLAIENNEDQAQCFSKRKQSWNYC.

It to M.pneumoniae MPN_376 central region.

This is an uncharacterized protein from Mycoplasma pneumoniae (strain ATCC 29342 / M129 / Subtype 1) (Mycoplasmoides pneumoniae).